The primary structure comprises 425 residues: Alpha/beta hydrolase xenA (425 aa).

Residue aspartate 366 is part of the active site.

Belongs to the AB hydrolase superfamily. FUS2 hydrolase family. In terms of assembly, homodimer.

Its pathway is mycotoxin biosynthesis. Functionally, alpha/beta hydrolase; part of the gene cluster that mediates the biosynthesis of xenoacremones such as xenoacremone A, a compound that shows inhibitory activity toward the PI3K/AKT signaling pathway and which has the ability to induce apoptosis of A549 lung cancer cells. Within the pathway, cooperation of the hybrid PKS-NRPS xenE and the trans-acting enoyl reductase xenG is responsible for the formation of the reduced tyrosine-nonaketide derivative. The alpha/beta hydrolase xenA then accelerates intramolecular nucleophilic attack to give a pyrrolidone derivative. Subsequently, three enzymes, xenF, xenD, and xenC, coordinately participate in the conversion to xenoacremone B. XenF catalyzes sigmatropic rearrangement to form an A-ring, which leads to an unusual intermediate with a hexane ring, which is required for the formation of the tricarbocyclic product. Epoxidation catalyzed by xenD and the formation of the paracyclophane ether catalyzed by xenC initiate a spontaneous intramolecular Diels-Alder (IMDA) reaction to yield xenoacremone B. Spontaneous hydration of xenoacremone B leads to the formation of xenoacremone A, which undergoes subsequent methylation to afford xenoacremone C. The chain is Alpha/beta hydrolase xenA from Xenoacremonium sinensis (Endophyte fungus).